We begin with the raw amino-acid sequence, 1433 residues long: Pleckstrin homology domain-containing family H member 1 (1433 aa).

Positions 40–174 (NIRHLLAERM…QILMLQDKLQ (135 aa)) form a coiled coil. Disordered stretches follow at residues 247–346 (DKAD…LSPP) and 552–634 (SSVP…TSSY). Residues 252-266 (PKSSQDGVDATSTVK) are compositionally biased toward polar residues. The segment covering 279–299 (MRDRAMGGASDRDHSSDELNS) has biased composition (basic and acidic residues). Low complexity predominate over residues 308–318 (SSSSSSSSSSS). The segment covering 332–343 (TPTPKSPPPVSL) has biased composition (pro residues). The segment covering 557 to 567 (PDDDSGSEDDS) has biased composition (acidic residues). Residues 568–578 (SSLASLHTSTL) show a composition bias toward low complexity. Residues 597-606 (VSTSSISSES) show a composition bias toward polar residues. PH domains follow at residues 643–737 (TLEK…NVLK) and 751–859 (KPTA…VAAG). In terms of domain architecture, MyTH4 spans 896–1050 (FSKEGLRYPL…PSRMEILSIL (155 aa)). Residues 1061-1392 (FSIPVHFMNN…SYINYWTSSL (332 aa)) enclose the FERM domain.

In terms of biological role, critical component of the guidance pathway underlying endothelial cell migration and blood vessel patterning. Involved in mediating membrane localization of ephrin proteins, which have been shown to provide guidance cues for endothelial cell migration. This is Pleckstrin homology domain-containing family H member 1 (plekhh1) from Danio rerio (Zebrafish).